Consider the following 503-residue polypeptide: Putative acyl--CoA ligase YdaB (503 aa).

The protein belongs to the ATP-dependent AMP-binding enzyme family.

This is Putative acyl--CoA ligase YdaB (ydaB) from Bacillus subtilis (strain 168).